We begin with the raw amino-acid sequence, 261 residues long: Non-structural protein 2a (261 aa).

The protein belongs to the coronaviruses ns2a protein family.

The protein resides in the host cytoplasm. Its function is as follows. Not essential for virus replication in transformed murine cells. This chain is Non-structural protein 2a, found in Mus musculus (Mouse).